The following is a 381-amino-acid chain: cAMP-dependent protein kinase type I-beta regulatory subunit (381 aa).

The interval 1-136 is dimerization and phosphorylation; sequence MASPSCFHSE…ALAKAISKNV (136 aa). Phosphoserine is present on S3. Y21 carries the post-translational modification 3'-nitrotyrosine. The disordered stretch occupies residues 66–88; sequence LARQKSNSQCDSHDEEISPTPPN. Phosphoserine occurs at positions 77 and 83. T85 is subject to Phosphothreonine. Residues 96 to 100 carry the Pseudophosphorylation motif motif; sequence RRGGV. R97 carries the post-translational modification Omega-N-methylarginine. 3',5'-cyclic AMP contacts are provided by residues 137–254, E202, R211, 255–381, E326, and R335; these read LFSH…SKVS and ILES…SLTV.

This sequence belongs to the cAMP-dependent kinase regulatory chain family. In terms of assembly, the inactive holoenzyme is composed of two regulatory chains and two catalytic chains. Activation by cAMP releases the two active catalytic monomers and the regulatory dimer. Interacts with PRKX; regulates this cAMP-dependent protein kinase. Interacts with smAKAP; this interaction may target PRKAR1B to the plasma membrane. In terms of processing, the pseudophosphorylation site binds to the substrate-binding region of the catalytic chain, resulting in the inhibition of its activity. Four types of regulatory chains are found: I-alpha, I-beta, II-alpha, and II-beta. Their expression varies among tissues and is in some cases constitutive and in others inducible.

The protein resides in the cell membrane. Regulatory subunit of the cAMP-dependent protein kinases involved in cAMP signaling in cells. The polypeptide is cAMP-dependent protein kinase type I-beta regulatory subunit (Prkar1b) (Mus musculus (Mouse)).